We begin with the raw amino-acid sequence, 148 residues long: Deoxyuridine 5'-triphosphate nucleotidohydrolase (148 aa).

Substrate is bound by residues 67–69 (RSG), asparagine 80, 84–86 (LID), and methionine 94.

This sequence belongs to the dUTPase family. It depends on Mg(2+) as a cofactor.

The enzyme catalyses dUTP + H2O = dUMP + diphosphate + H(+). It participates in pyrimidine metabolism; dUMP biosynthesis; dUMP from dCTP (dUTP route): step 2/2. In terms of biological role, this enzyme is involved in nucleotide metabolism: it produces dUMP, the immediate precursor of thymidine nucleotides and it decreases the intracellular concentration of dUTP so that uracil cannot be incorporated into DNA. The protein is Deoxyuridine 5'-triphosphate nucleotidohydrolase of Burkholderia lata (strain ATCC 17760 / DSM 23089 / LMG 22485 / NCIMB 9086 / R18194 / 383).